Reading from the N-terminus, the 485-residue chain is Zinc finger SWIM domain-containing protein 1 (485 aa).

The SWIM-type zinc-finger motif lies at 363–405; it reads MNIQILEDTHKVQPQPPASCSCYFNQAFHLPCRHILAMLSARR.

The chain is Zinc finger SWIM domain-containing protein 1 (ZSWIM1) from Homo sapiens (Human).